The chain runs to 314 residues: Olfactory receptor 5P72 (314 aa).

The Extracellular portion of the chain corresponds to Met1 to Val28. N-linked (GlcNAc...) asparagine glycosylation occurs at Asn8. The helical transmembrane segment at Val29 to Ile49 threads the bilayer. The Cytoplasmic segment spans residues Leu50 to Gln57. Residues Leu58–Ser78 traverse the membrane as a helical segment. Residues Ser79–Ile102 lie on the Extracellular side of the membrane. Cys100 and Cys192 form a disulfide bridge. A helical membrane pass occupies residues Gln103–Tyr123. At Asp124–Ser136 the chain is on the cytoplasmic side. A helical transmembrane segment spans residues Thr137–Leu157. Topologically, residues Asn158 to Val199 are extracellular. The helical transmembrane segment at Ile200–Ser220 threads the bilayer. At Tyr221 to Ala240 the chain is on the cytoplasmic side. A helical transmembrane segment spans residues Phe241 to Ile261. Over Tyr262–Asn274 the chain is Extracellular. Residues Lys275–Leu295 traverse the membrane as a helical segment. The Cytoplasmic portion of the chain corresponds to Arg296 to Cys314.

The protein belongs to the G-protein coupled receptor 1 family.

It is found in the cell membrane. In terms of biological role, potential odorant receptor. The protein is Olfactory receptor 5P72 of Mus musculus (Mouse).